The chain runs to 464 residues: Methionine aminopeptidase 2 (464 aa).

The interval 1–86 (MGSKTPGNHR…RKKKKKNTKE (86 aa)) is disordered. Over residues 43-54 (GESEGGEDEDDD) the composition is skewed to acidic residues. Over residues 72 to 83 (KRNKRRKKKKKN) the composition is skewed to basic residues. His-216 serves as a coordination point for substrate. A divalent metal cation-binding residues include Asp-237, Asp-248, and His-317. His-325 is a substrate binding site. Residues Glu-350 and Glu-445 each contribute to the a divalent metal cation site.

It belongs to the peptidase M24A family. Methionine aminopeptidase eukaryotic type 2 subfamily. Co(2+) serves as cofactor. Zn(2+) is required as a cofactor. It depends on Mn(2+) as a cofactor. Requires Fe(2+) as cofactor.

The protein resides in the cytoplasm. The catalysed reaction is Release of N-terminal amino acids, preferentially methionine, from peptides and arylamides.. In terms of biological role, cotranslationally removes the N-terminal methionine from nascent proteins. The N-terminal methionine is often cleaved when the second residue in the primary sequence is small and uncharged (Met-Ala-, Cys, Gly, Pro, Ser, Thr, or Val). The protein is Methionine aminopeptidase 2 of Ajellomyces capsulatus (strain NAm1 / WU24) (Darling's disease fungus).